Here is a 438-residue protein sequence, read N- to C-terminus: sn-glycerol-3-phosphate-binding periplasmic protein UgpB (438 aa).

The signal sequence occupies residues methionine 1 to alanine 23. The sn-glycerol 3-phosphate site is built by tyrosine 65, glutamate 89, serine 144, serine 270, glycine 307, tyrosine 346, and arginine 397.

This sequence belongs to the bacterial solute-binding protein 1 family. The complex is composed of two ATP-binding proteins (UgpC), two transmembrane proteins (UgpA and UgpE) and a solute-binding protein (UgpB).

It is found in the periplasm. Functionally, part of the ABC transporter complex UgpBAEC involved in sn-glycerol-3-phosphate (G3P) import. Binds G3P. The protein is sn-glycerol-3-phosphate-binding periplasmic protein UgpB (ugpB) of Shigella dysenteriae serotype 1 (strain Sd197).